The primary structure comprises 156 residues: 6,7-dimethyl-8-ribityllumazine synthase (156 aa).

5-amino-6-(D-ribitylamino)uracil is bound by residues F23, 57–59 (AYE), and 81–83 (AII). (2S)-2-hydroxy-3-oxobutyl phosphate is bound at residue 86 to 87 (GT). The active-site Proton donor is the H89. Residue F114 coordinates 5-amino-6-(D-ribitylamino)uracil. Residue R128 participates in (2S)-2-hydroxy-3-oxobutyl phosphate binding.

It belongs to the DMRL synthase family.

The catalysed reaction is (2S)-2-hydroxy-3-oxobutyl phosphate + 5-amino-6-(D-ribitylamino)uracil = 6,7-dimethyl-8-(1-D-ribityl)lumazine + phosphate + 2 H2O + H(+). It participates in cofactor biosynthesis; riboflavin biosynthesis; riboflavin from 2-hydroxy-3-oxobutyl phosphate and 5-amino-6-(D-ribitylamino)uracil: step 1/2. Catalyzes the formation of 6,7-dimethyl-8-ribityllumazine by condensation of 5-amino-6-(D-ribitylamino)uracil with 3,4-dihydroxy-2-butanone 4-phosphate. This is the penultimate step in the biosynthesis of riboflavin. This Helicobacter pylori (strain G27) protein is 6,7-dimethyl-8-ribityllumazine synthase.